The chain runs to 92 residues: Large ribosomal subunit protein eL43A (92 aa).

The C4-type zinc-finger motif lies at 39 to 60; it reads CSFCGKKTVKRGAAGIWTCSCC. Ser-40 carries the post-translational modification Phosphoserine.

The protein belongs to the eukaryotic ribosomal protein eL43 family. Component of the large ribosomal subunit (LSU). Mature yeast ribosomes consist of a small (40S) and a large (60S) subunit. The 40S small subunit contains 1 molecule of ribosomal RNA (18S rRNA) and 33 different proteins (encoded by 57 genes). The large 60S subunit contains 3 rRNA molecules (25S, 5.8S and 5S rRNA) and 46 different proteins (encoded by 81 genes).

It is found in the cytoplasm. Component of the ribosome, a large ribonucleoprotein complex responsible for the synthesis of proteins in the cell. The small ribosomal subunit (SSU) binds messenger RNAs (mRNAs) and translates the encoded message by selecting cognate aminoacyl-transfer RNA (tRNA) molecules. The large subunit (LSU) contains the ribosomal catalytic site termed the peptidyl transferase center (PTC), which catalyzes the formation of peptide bonds, thereby polymerizing the amino acids delivered by tRNAs into a polypeptide chain. The nascent polypeptides leave the ribosome through a tunnel in the LSU and interact with protein factors that function in enzymatic processing, targeting, and the membrane insertion of nascent chains at the exit of the ribosomal tunnel. This Saccharomyces cerevisiae (strain ATCC 204508 / S288c) (Baker's yeast) protein is Large ribosomal subunit protein eL43A.